A 310-amino-acid chain; its full sequence is tRNA-cytidine(32) 2-sulfurtransferase (310 aa).

A PP-loop motif motif is present at residues 47-52; the sequence is SGGKDS. Cys-122, Cys-125, and Cys-213 together coordinate [4Fe-4S] cluster.

It belongs to the TtcA family. Homodimer. Requires Mg(2+) as cofactor. It depends on [4Fe-4S] cluster as a cofactor.

It localises to the cytoplasm. It catalyses the reaction cytidine(32) in tRNA + S-sulfanyl-L-cysteinyl-[cysteine desulfurase] + AH2 + ATP = 2-thiocytidine(32) in tRNA + L-cysteinyl-[cysteine desulfurase] + A + AMP + diphosphate + H(+). The protein operates within tRNA modification. Catalyzes the ATP-dependent 2-thiolation of cytidine in position 32 of tRNA, to form 2-thiocytidine (s(2)C32). The sulfur atoms are provided by the cysteine/cysteine desulfurase (IscS) system. This chain is tRNA-cytidine(32) 2-sulfurtransferase, found in Cronobacter sakazakii (strain ATCC BAA-894) (Enterobacter sakazakii).